Reading from the N-terminus, the 227-residue chain is MAYPFQLGLQDATSPIMEELLHFHDHTLMIVFLISSLVLYIISSMLTTKLTHTSTMDAQEVETVWTILPAIILVLIALPSLRILYMMDEINNPSLTVKTLGHQWYWSYEYTDYEDLNFDSYMIPTQELKPGELRLLEVDNRVVLPMEMTIRMLISSEDVLHSWAVPSLGLKTDAIPGRLNQTTLMATRPGLYYGQCSEICGSNHSFMPIVLEMVPLSYFETWSALML.

Residues 1–14 (MAYPFQLGLQDATS) are Mitochondrial intermembrane-facing. Residues 15–45 (PIMEELLHFHDHTLMIVFLISSLVLYIISSM) traverse the membrane as a helical segment. Residues 46 to 59 (LTTKLTHTSTMDAQ) lie on the Mitochondrial matrix side of the membrane. A helical transmembrane segment spans residues 60–87 (EVETVWTILPAIILVLIALPSLRILYMM). Over 88-227 (DEINNPSLTV…YFETWSALML (140 aa)) the chain is Mitochondrial intermembrane. Cu cation-binding residues include His-161, Cys-196, Glu-198, Cys-200, His-204, and Met-207. Residue Glu-198 coordinates Mg(2+). Phosphotyrosine is present on Tyr-218.

The protein belongs to the cytochrome c oxidase subunit 2 family. In terms of assembly, component of the cytochrome c oxidase (complex IV, CIV), a multisubunit enzyme composed of 14 subunits. The complex is composed of a catalytic core of 3 subunits MT-CO1, MT-CO2 and MT-CO3, encoded in the mitochondrial DNA, and 11 supernumerary subunits COX4I, COX5A, COX5B, COX6A, COX6B, COX6C, COX7A, COX7B, COX7C, COX8 and NDUFA4, which are encoded in the nuclear genome. The complex exists as a monomer or a dimer and forms supercomplexes (SCs) in the inner mitochondrial membrane with NADH-ubiquinone oxidoreductase (complex I, CI) and ubiquinol-cytochrome c oxidoreductase (cytochrome b-c1 complex, complex III, CIII), resulting in different assemblies (supercomplex SCI(1)III(2)IV(1) and megacomplex MCI(2)III(2)IV(2)). Found in a complex with TMEM177, COA6, COX18, COX20, SCO1 and SCO2. Interacts with TMEM177 in a COX20-dependent manner. Interacts with COX20. Interacts with COX16. The cofactor is Cu cation.

Its subcellular location is the mitochondrion inner membrane. It catalyses the reaction 4 Fe(II)-[cytochrome c] + O2 + 8 H(+)(in) = 4 Fe(III)-[cytochrome c] + 2 H2O + 4 H(+)(out). Functionally, component of the cytochrome c oxidase, the last enzyme in the mitochondrial electron transport chain which drives oxidative phosphorylation. The respiratory chain contains 3 multisubunit complexes succinate dehydrogenase (complex II, CII), ubiquinol-cytochrome c oxidoreductase (cytochrome b-c1 complex, complex III, CIII) and cytochrome c oxidase (complex IV, CIV), that cooperate to transfer electrons derived from NADH and succinate to molecular oxygen, creating an electrochemical gradient over the inner membrane that drives transmembrane transport and the ATP synthase. Cytochrome c oxidase is the component of the respiratory chain that catalyzes the reduction of oxygen to water. Electrons originating from reduced cytochrome c in the intermembrane space (IMS) are transferred via the dinuclear copper A center (CU(A)) of subunit 2 and heme A of subunit 1 to the active site in subunit 1, a binuclear center (BNC) formed by heme A3 and copper B (CU(B)). The BNC reduces molecular oxygen to 2 water molecules using 4 electrons from cytochrome c in the IMS and 4 protons from the mitochondrial matrix. This is Cytochrome c oxidase subunit 2 (MT-CO2) from Speothos venaticus (Bush dog).